We begin with the raw amino-acid sequence, 443 residues long: UDP-N-acetylmuramate--L-alanine ligase (443 aa).

ATP is bound at residue 110 to 116 (GAHGKTS).

It belongs to the MurCDEF family.

The protein resides in the cytoplasm. It carries out the reaction UDP-N-acetyl-alpha-D-muramate + L-alanine + ATP = UDP-N-acetyl-alpha-D-muramoyl-L-alanine + ADP + phosphate + H(+). Its pathway is cell wall biogenesis; peptidoglycan biosynthesis. Cell wall formation. This Streptococcus equi subsp. zooepidemicus (strain MGCS10565) protein is UDP-N-acetylmuramate--L-alanine ligase.